A 183-amino-acid chain; its full sequence is Oleosin 5 (183 aa).

The interval 1–39 (MADVRTHSHQLQVHPQRQHEGGIKVLYPQSGPSSTQVLA) is polar. Helical transmembrane passes span 37-57 (VLAVFVGVPIGGTLLTIAGLT), 66-86 (MLAFPLFLIFSPVIVPAAFVI), and 87-107 (GLAMTGFLASGAIGLTGLSSM). The segment at 40–113 (VFVGVPIGGT…LSSMSWVLNY (74 aa)) is hydrophobic. A disordered region spans residues 144 to 183 (KDAGQTIEDKAHDVREAKTFDVRDRDTTKGTHNVRDTKTT).

Belongs to the oleosin family.

It localises to the lipid droplet. Its subcellular location is the membrane. Its function is as follows. May have a structural role to stabilize the lipid body during desiccation of the seed by preventing coalescence of the oil. Probably interacts with both lipid and phospholipid moieties of lipid bodies. May also provide recognition signals for specific lipase anchorage in lipolysis during seedling growth. The chain is Oleosin 5 from Arabidopsis thaliana (Mouse-ear cress).